The chain runs to 331 residues: Ferredoxin--NADP reductase (331 aa).

8 residues coordinate FAD: T20, E39, Q47, Y52, V92, F126, D287, and S328.

It belongs to the ferredoxin--NADP reductase type 2 family. In terms of assembly, homodimer. The cofactor is FAD.

The catalysed reaction is 2 reduced [2Fe-2S]-[ferredoxin] + NADP(+) + H(+) = 2 oxidized [2Fe-2S]-[ferredoxin] + NADPH. The sequence is that of Ferredoxin--NADP reductase from Bacillus cereus (strain ZK / E33L).